The chain runs to 309 residues: 4-diphosphocytidyl-2-C-methyl-D-erythritol kinase (309 aa).

Lys28 is an active-site residue. An ATP-binding site is contributed by 120-130 (PSQAGMGGGSS). Residue Asp162 is part of the active site.

This sequence belongs to the GHMP kinase family. IspE subfamily.

The catalysed reaction is 4-CDP-2-C-methyl-D-erythritol + ATP = 4-CDP-2-C-methyl-D-erythritol 2-phosphate + ADP + H(+). Its pathway is isoprenoid biosynthesis; isopentenyl diphosphate biosynthesis via DXP pathway; isopentenyl diphosphate from 1-deoxy-D-xylulose 5-phosphate: step 3/6. In terms of biological role, catalyzes the phosphorylation of the position 2 hydroxy group of 4-diphosphocytidyl-2C-methyl-D-erythritol. The polypeptide is 4-diphosphocytidyl-2-C-methyl-D-erythritol kinase (Polaromonas sp. (strain JS666 / ATCC BAA-500)).